Consider the following 438-residue polypeptide: Protein DAY-LENGTH-DEPENDENT DELAYED-GREENING 1, chloroplastic (438 aa).

A chloroplast-targeting transit peptide spans 1 to 54 (MSLMSSSMVLCHCLSFSSQNPDPESSSSSLLRYKPCDSISLWGKRRKKLWRFVP). A run of 4 helical transmembrane segments spans residues 216–236 (FLAV…DYLL), 314–334 (AFAN…LLYA), 359–379 (AFLI…SGWE), and 398–418 (ITIF…LWLF).

This sequence belongs to the CemA family.

It is found in the plastid. The protein localises to the chloroplast envelope. The protein resides in the chloroplast membrane. It catalyses the reaction K(+)(in) + H(+)(out) = K(+)(out) + H(+)(in). The enzyme catalyses Ca(2+)(in) + H(+)(out) = Ca(2+)(out) + H(+)(in). Its function is as follows. Promotes K(+)/H(+) antiport activity supporting K(+) efflux to control H(+) homeostasis in chloroplasts. Also able to ensure Ca(2+)/H(+) antiport activity in vitro. Essential for chloroplast pH regulation and optimization of non-photochemical quenching (NPQ), a regulatory mechanism that dissipates excess light energy; acts downstream of PSBS but independently from PGR5 and FLAP1. The chain is Protein DAY-LENGTH-DEPENDENT DELAYED-GREENING 1, chloroplastic from Arabidopsis thaliana (Mouse-ear cress).